The primary structure comprises 359 residues: Endoglucanase (359 aa).

The signal sequence occupies residues 1–23; that stretch reads MPLRALVAVIVTTAVMLVPRAWA. Glutamate 53 functions as the Proton donor in the catalytic mechanism. Aspartate 110 acts as the Nucleophile in catalysis.

Belongs to the glycosyl hydrolase 8 (cellulase D) family.

It carries out the reaction Endohydrolysis of (1-&gt;4)-beta-D-glucosidic linkages in cellulose, lichenin and cereal beta-D-glucans.. The biological conversion of cellulose to glucose generally requires three types of hydrolytic enzymes: (1) Endoglucanases which cut internal beta-1,4-glucosidic bonds; (2) Exocellobiohydrolases that cut the disaccharide cellobiose from the non-reducing end of the cellulose polymer chain; (3) Beta-1,4-glucosidases which hydrolyze the cellobiose and other short cello-oligosaccharides to glucose. The protein is Endoglucanase of Cellulomonas uda.